A 109-amino-acid polypeptide reads, in one-letter code: uncharacterized protein (109 aa).

Positions 1–22 (MKRFPLFLLFTLLTLSTVPAQA) are cleaved as a signal peptide. The interval 39–109 (AYNPDRGRDY…ERRMEDEYGR (71 aa)) is disordered. Basic and acidic residues predominate over residues 41-109 (NPDRGRDYED…ERRMEDEYGR (69 aa)).

This is an uncharacterized protein from Escherichia coli O6:H1 (strain CFT073 / ATCC 700928 / UPEC).